Reading from the N-terminus, the 272-residue chain is Alpha-tubulin N-acetyltransferase (272 aa).

One can recognise an N-acetyltransferase domain in the interval 1–186 (MEFRFNCHPL…NNFVVYEGFF (186 aa)). Residues 120–133 (FYVHESRQRGGLGR) and 156–165 (SEKLLGFLQK) each bind acetyl-CoA. Residues 216–244 (TTVGEQRRSSSQTRQQVVSPPVVQQPPVG) are disordered. Residues 224–244 (SSSQTRQQVVSPPVVQQPPVG) are compositionally biased toward low complexity.

It belongs to the acetyltransferase ATAT1 family.

The catalysed reaction is L-lysyl-[alpha-tubulin] + acetyl-CoA = N(6)-acetyl-L-lysyl-[alpha-tubulin] + CoA + H(+). In terms of biological role, specifically acetylates 'Lys-40' in alpha-tubulin on the lumenal side of microtubules. Promotes microtubule destabilization and accelerates microtubule dynamics; this activity may be independent of acetylation activity. Acetylates alpha-tubulin with a slow enzymatic rate, due to a catalytic site that is not optimized for acetyl transfer. Enters the microtubule through each end and diffuses quickly throughout the lumen of microtubules. Acetylates only long/old microtubules because of its slow acetylation rate since it does not have time to act on dynamically unstable microtubules before the enzyme is released. This is Alpha-tubulin N-acetyltransferase from Aedes aegypti (Yellowfever mosquito).